The sequence spans 95 residues: Acylphosphatase (95 aa).

Positions 8–95 (RAKILVRGKV…GNFRTFEIKK (88 aa)) constitute an Acylphosphatase-like domain. Active-site residues include Arg-23 and Asn-41.

This sequence belongs to the acylphosphatase family.

The catalysed reaction is an acyl phosphate + H2O = a carboxylate + phosphate + H(+). The protein is Acylphosphatase (acyP) of Leptospira interrogans serogroup Icterohaemorrhagiae serovar copenhageni (strain Fiocruz L1-130).